Consider the following 540-residue polypeptide: Chaperonin GroEL (540 aa).

ATP is bound by residues 29–32, 86–90, Gly-413, and Asp-493; these read TLGP and DGTTT. The tract at residues 520-540 is disordered; it reads AEKPEPKPAPGPADPGAGMDF.

This sequence belongs to the chaperonin (HSP60) family. As to quaternary structure, forms a cylinder of 14 subunits composed of two heptameric rings stacked back-to-back. Interacts with the co-chaperonin GroES.

It is found in the cytoplasm. The enzyme catalyses ATP + H2O + a folded polypeptide = ADP + phosphate + an unfolded polypeptide.. Together with its co-chaperonin GroES, plays an essential role in assisting protein folding. The GroEL-GroES system forms a nano-cage that allows encapsulation of the non-native substrate proteins and provides a physical environment optimized to promote and accelerate protein folding. This Tropheryma whipplei (Whipple's bacillus) protein is Chaperonin GroEL.